Reading from the N-terminus, the 289-residue chain is BTB/POZ domain-containing protein KCTD7 (289 aa).

The tract at residues 1–42 (MVVVNGREPDSRHSDGAMSSSEAEDDFLEPATPTATQAGHGL) is disordered. Residues 53 to 141 (VPLNIGGAHF…YAIGPLLEQL (89 aa)) form the BTB domain.

As to quaternary structure, interacts with CUL3.

The protein resides in the cell membrane. It is found in the cytoplasm. The protein localises to the cytosol. May be involved in the control of excitability of cortical neurons. The polypeptide is BTB/POZ domain-containing protein KCTD7 (Kctd7) (Rattus norvegicus (Rat)).